Reading from the N-terminus, the 232-residue chain is Phosphatidylserine decarboxylase proenzyme (232 aa).

Catalysis depends on S190, which acts as the Schiff-base intermediate with substrate; via pyruvic acid. S190 is subject to Pyruvic acid (Ser); by autocatalysis.

This sequence belongs to the phosphatidylserine decarboxylase family. PSD-A subfamily. Heterodimer of a large membrane-associated beta subunit and a small pyruvoyl-containing alpha subunit. The cofactor is pyruvate. Post-translationally, is synthesized initially as an inactive proenzyme. Formation of the active enzyme involves a self-maturation process in which the active site pyruvoyl group is generated from an internal serine residue via an autocatalytic post-translational modification. Two non-identical subunits are generated from the proenzyme in this reaction, and the pyruvate is formed at the N-terminus of the alpha chain, which is derived from the carboxyl end of the proenzyme. The post-translation cleavage follows an unusual pathway, termed non-hydrolytic serinolysis, in which the side chain hydroxyl group of the serine supplies its oxygen atom to form the C-terminus of the beta chain, while the remainder of the serine residue undergoes an oxidative deamination to produce ammonia and the pyruvoyl prosthetic group on the alpha chain.

The protein resides in the cell membrane. The enzyme catalyses a 1,2-diacyl-sn-glycero-3-phospho-L-serine + H(+) = a 1,2-diacyl-sn-glycero-3-phosphoethanolamine + CO2. Its pathway is phospholipid metabolism; phosphatidylethanolamine biosynthesis; phosphatidylethanolamine from CDP-diacylglycerol: step 2/2. Its function is as follows. Catalyzes the formation of phosphatidylethanolamine (PtdEtn) from phosphatidylserine (PtdSer). The polypeptide is Phosphatidylserine decarboxylase proenzyme (Mesorhizobium japonicum (strain LMG 29417 / CECT 9101 / MAFF 303099) (Mesorhizobium loti (strain MAFF 303099))).